The following is a 344-amino-acid chain: Chorismatase (344 aa).

Residues Tyr-155, Arg-162, Tyr-215, and Arg-228 each contribute to the substrate site. The Proton acceptor role is filled by Glu-338.

This sequence belongs to the FkbO/Hyg5 family. In terms of assembly, monomer.

The catalysed reaction is chorismate + H2O = (3R,4R)-3,4-dihydroxy-3,4-dihydrobenzoate + pyruvate. Its activity is regulated as follows. Competitively inhibited by 3-(2-carboxyethyl)benzoate. Involved in the biosynthesis of the macrocyclic amino acid-linked polyketides FK506 and FK520 which are potent immunosuppressants that prevent T-cell proliferation through initial binding to the immunophilin FKBP12. Catalyzes the hydrolysis of chorismate via a 1,4-conjugate elimination of water to yield (4R,5R)-4,5-dihydroxycyclohexa-1,5-dienecarboxylic acid (DCDC). The sequence is that of Chorismatase (fkbO) from Streptomyces hygroscopicus.